Reading from the N-terminus, the 238-residue chain is Phosphoribosylaminoimidazole-succinocarboxamide synthase (238 aa).

It belongs to the SAICAR synthetase family.

It catalyses the reaction 5-amino-1-(5-phospho-D-ribosyl)imidazole-4-carboxylate + L-aspartate + ATP = (2S)-2-[5-amino-1-(5-phospho-beta-D-ribosyl)imidazole-4-carboxamido]succinate + ADP + phosphate + 2 H(+). The protein operates within purine metabolism; IMP biosynthesis via de novo pathway; 5-amino-1-(5-phospho-D-ribosyl)imidazole-4-carboxamide from 5-amino-1-(5-phospho-D-ribosyl)imidazole-4-carboxylate: step 1/2. The sequence is that of Phosphoribosylaminoimidazole-succinocarboxamide synthase from Desulfitobacterium hafniense (strain Y51).